The primary structure comprises 422 residues: Synaptotagmin-1 (422 aa).

Residues 1–57 lie on the Vesicular side of the membrane; it reads MVSESHHEALAAPPVTTVATVLPSNATEPASPGEGKEDAFSKLKEKFMNELHKIPLP. Residue N25 is glycosylated (N-linked (GlcNAc...) asparagine). Residues 58 to 80 form a helical membrane-spanning segment; that stretch reads PWALIAIAIVAVLLVLTCCFCIC. 5 S-palmitoyl cysteine lipidation sites follow: C75, C76, C78, C80, and C83. At 81 to 422 the chain is on the cytoplasmic side; sequence KKCLFKKKNK…EVDAMLAVKK (342 aa). The segment at 113-142 is disordered; that stretch reads TMKDQALKDDDAETGLTDGEEKEEPKEEEK. Acidic residues predominate over residues 122-134; it reads DDAETGLTDGEEK. T129 bears the Phosphothreonine mark. The segment at 136-382 is phospholipid binding; sequence EPKEEEKLGK…AIGKVFVGYN (247 aa). The C2 1 domain maps to 142-261; it reads KLGKLQYSLD…DFGHVTEEWR (120 aa). Residues L172, D173, and D179 each coordinate Ca(2+). At Y230 the chain carries Phosphotyrosine. 6 residues coordinate Ca(2+): D231, F232, D233, S236, K237, and D239. A Phosphoserine modification is found at S265. The 134-residue stretch at 273 to 406 folds into the C2 2 domain; sequence KLGDICFSLR…NPRRPIAQWH (134 aa). Ca(2+) contacts are provided by D304 and D310. 2 positions are modified to phosphoserine: S343 and S345. Ca(2+) is bound by residues D364, D366, and D372.

This sequence belongs to the synaptotagmin family. Homotetramer. Heterodimer; heterodimerizes with SYT2 in presence of calcium. Interacts with SCAMP5. Interacts with STON2. Forms a complex with SV2B, syntaxin 1 and SNAP25. Interacts with SV2A, SV2B and SV2C. Interacts with RIMS1. Interacts with PRRT2. Interacts with DNAJC5 in a phosphorylation-dependent manner. Interacts (via N-terminus) with RAB3A. Interacts with SYT12. Interacts with calmodulin. Interacts with DNM1 (via C-terminal proline-rich domain (PRD)); this interaction facilitates vesicle fission during clathrin-mediated endocytosis (CME). The cofactor is Ca(2+). Glycosylated. In terms of tissue distribution, expressed in melanocytes.

It is found in the cytoplasmic vesicle. The protein resides in the secretory vesicle membrane. It localises to the secretory vesicle. The protein localises to the synaptic vesicle membrane. Its subcellular location is the chromaffin granule membrane. It is found in the cytoplasm. Functionally, calcium sensor that participates in triggering neurotransmitter release at the synapse. May have a regulatory role in the membrane interactions during trafficking of synaptic vesicles at the active zone of the synapse. It binds acidic phospholipids with a specificity that requires the presence of both an acidic head group and a diacyl backbone. A Ca(2+)-dependent interaction between synaptotagmin and putative receptors for activated protein kinase C has also been reported. It can bind to at least three additional proteins in a Ca(2+)-independent manner; these are neurexins, syntaxin and AP2. Plays a role in dendrite formation by melanocytes. The protein is Synaptotagmin-1 of Homo sapiens (Human).